A 506-amino-acid polypeptide reads, in one-letter code: UBX domain-containing protein 4 (506 aa).

Positions 1-199 (MLWFQGAIPA…PAEDLTVRVE (199 aa)) are interaction with UBQLN1. The Cytoplasmic portion of the chain corresponds to 1-411 (MLWFQGAIPA…VPSSSGDIWT (411 aa)). Polar residues-rich tracts occupy residues 114-136 (SLKG…TPSA) and 177-189 (SLSQ…SNQR). A disordered region spans residues 114-193 (SLKGETSVTN…GCSNQRPAED (80 aa)). In terms of domain architecture, UBX spans 313–391 (DRSTIARIQF…ELAPSASVVL (79 aa)). The stretch at 412-432 (LLGTVLYPFLAIWRLISNFLF) is an intramembrane region. Residues 433-506 (SNPPPAQTSA…TWNGNSTQQM (74 aa)) are Cytoplasmic-facing. The tract at residues 437–506 (PAQTSARATS…TWNGNSTQQM (70 aa)) is disordered. Low complexity predominate over residues 444 to 456 (ATSTEPSNSASSS). Residues 457–489 (KSEKREPVRKRVLEKRGEDFKKEGKIYRLRTQD) show a composition bias toward basic and acidic residues. T487 bears the Phosphothreonine mark. Polar residues predominate over residues 496-506 (NTWNGNSTQQM).

Directly interacts with VCP. Interacts with UBQLN1. Forms a complex with VCP and UBQLN1.

It is found in the endoplasmic reticulum membrane. The protein localises to the nucleus envelope. Involved in endoplasmic reticulum-associated protein degradation (ERAD). Acts as a platform to recruit both UBQLN1 and VCP to the ER during ERAD. The sequence is that of UBX domain-containing protein 4 (Ubxn4) from Rattus norvegicus (Rat).